The primary structure comprises 361 residues: MKGLILVGGYGTRLRPLTLTVPKPLVEFGNRPMILHQIEALAAAGVTDIVLAVNYRPEVMVETLKKYEDEFGVSITFSVETEPLGTAGPLKLAESVLKKDNSPFFVLNSDVICDYPFKELADFHQAHGGKGTIVATKVDEPSKYGVIVHDIATPNLIDRFVEKPVEFVGNRINAGLYILNPEVIDLIDLKPTSIEKETFPILVEQKSLYSFDLEGYWMDVGQPKDFLSGTVLYLNSLSKRDPAKLAKGENIVGNVLVDPTAKISPTAKVGPDVVIGPNVVIGDGVRITRSVALSNSHIKDHALVKSTIIGWNSTVGKWARLEGVTVLGDDVEVKDEIYINGGKVLPHKSISVNVPKEAIIM.

Belongs to the transferase hexapeptide repeat family.

The protein resides in the cytoplasm. It carries out the reaction alpha-D-mannose 1-phosphate + GTP + H(+) = GDP-alpha-D-mannose + diphosphate. It functions in the pathway nucleotide-sugar biosynthesis; GDP-alpha-D-mannose biosynthesis; GDP-alpha-D-mannose from alpha-D-mannose 1-phosphate (GTP route): step 1/1. Functionally, involved in cell wall synthesis where it is required for glycosylation. Involved in cell cycle progression through cell-size checkpoint. This is Mannose-1-phosphate guanyltransferase (MPG1) from Kluyveromyces lactis (strain ATCC 8585 / CBS 2359 / DSM 70799 / NBRC 1267 / NRRL Y-1140 / WM37) (Yeast).